A 305-amino-acid polypeptide reads, in one-letter code: Spermatogenesis-associated protein 4 (305 aa).

In terms of domain architecture, Calponin-homology (CH) spans 49-155 (SRLSRSVLRW…EEVYTLLTHR (107 aa)).

In terms of tissue distribution, highly expressed in testis, the expression is observed precisely in seminiferous tubules.

Its subcellular location is the nucleus. May play a role in apoptosis regulation. This is Spermatogenesis-associated protein 4 (SPATA4) from Homo sapiens (Human).